The primary structure comprises 96 residues: Mapk-regulated corepressor-interacting protein 1 (96 aa).

Disordered stretches follow at residues 1 to 28 (MASS…GSEI) and 76 to 96 (AFKP…AKKS). The PXDLS motif signature appears at 79–83 (PVDLS). Residues 81–96 (DLSDLKRRNTQDAKKS) show a composition bias toward basic and acidic residues.

It belongs to the MCRIP family.

The protein resides in the nucleus. It localises to the cytoplasm. It is found in the stress granule. Functionally, may play a role in the regulation of the epithelial-mesenchymal transition. This Gallus gallus (Chicken) protein is Mapk-regulated corepressor-interacting protein 1 (MCRIP1).